A 350-amino-acid chain; its full sequence is Hydroxymethylglutaryl-CoA synthase (350 aa).

Glu-83 (proton donor/acceptor) is an active-site residue. The active-site Acyl-thioester intermediate is Cys-115. Positions 115 and 156 each coordinate (3S)-3-hydroxy-3-methylglutaryl-CoA. Arg-204 is a CoA binding site. 2 residues coordinate (3S)-3-hydroxy-3-methylglutaryl-CoA: Thr-206 and His-239. Catalysis depends on His-239, which acts as the Proton donor/acceptor. Lys-244 serves as a coordination point for CoA. Residues Asn-271 and Ser-301 each contribute to the (3S)-3-hydroxy-3-methylglutaryl-CoA site.

The protein belongs to the thiolase-like superfamily. Archaeal HMG-CoA synthase family. In terms of assembly, interacts with acetoacetyl-CoA thiolase that catalyzes the precedent step in the pathway and with a DUF35 protein. The acetoacetyl-CoA thiolase/HMG-CoA synthase complex channels the intermediate via a fused CoA-binding site, which allows for efficient coupling of the endergonic thiolase reaction with the exergonic HMGCS reaction.

The catalysed reaction is acetoacetyl-CoA + acetyl-CoA + H2O = (3S)-3-hydroxy-3-methylglutaryl-CoA + CoA + H(+). It functions in the pathway metabolic intermediate biosynthesis; (R)-mevalonate biosynthesis; (R)-mevalonate from acetyl-CoA: step 2/3. Its function is as follows. Catalyzes the condensation of acetyl-CoA with acetoacetyl-CoA to form 3-hydroxy-3-methylglutaryl-CoA (HMG-CoA). Functions in the mevalonate (MVA) pathway leading to isopentenyl diphosphate (IPP), a key precursor for the biosynthesis of isoprenoid compounds that are building blocks of archaeal membrane lipids. This chain is Hydroxymethylglutaryl-CoA synthase, found in Thermococcus kodakarensis (strain ATCC BAA-918 / JCM 12380 / KOD1) (Pyrococcus kodakaraensis (strain KOD1)).